The sequence spans 126 residues: Small ribosomal subunit protein uS13c (126 aa).

The interval 95–126 (GLPLRGQNTRTNARTKRGIKKTMAGKKKAPRK) is disordered. A compositionally biased stretch (basic residues) spans 107-126 (ARTKRGIKKTMAGKKKAPRK).

This sequence belongs to the universal ribosomal protein uS13 family. Part of the 30S ribosomal subunit.

The protein localises to the plastid. It is found in the chloroplast. In terms of biological role, located at the top of the head of the 30S subunit, it contacts several helices of the 16S rRNA. The sequence is that of Small ribosomal subunit protein uS13c from Gracilaria tenuistipitata var. liui (Red alga).